The chain runs to 524 residues: uncharacterized protein (524 aa).

Residues 83 to 101 (NSTPSKQAKPLQRNSPYQG) are compositionally biased toward polar residues. Disordered regions lie at residues 83–108 (NSTP…SENQ) and 155–179 (PPCN…KRPR).

Its subcellular location is the cytoplasm. This is an uncharacterized protein from Saccharomyces cerevisiae (strain ATCC 204508 / S288c) (Baker's yeast).